Reading from the N-terminus, the 203-residue chain is Cytochrome c oxidase assembly protein CtaG (203 aa).

Residues 1 to 16 are Cytoplasmic-facing; the sequence is MADQQEKDQKLKKQQR. Residues 17–39 traverse the membrane as a helical; Signal-anchor for type II membrane protein segment; that stretch reads SNATIAFACLSFFVCMIGAAYAS. At 40–203 the chain is on the periplasmic side; it reads VPLYRIFCQV…VKAETPTNGS (164 aa).

Belongs to the COX11/CtaG family.

The protein localises to the cell inner membrane. Functionally, exerts its effect at some terminal stage of cytochrome c oxidase synthesis, probably by being involved in the insertion of the copper B into subunit I. The chain is Cytochrome c oxidase assembly protein CtaG from Brucella anthropi (strain ATCC 49188 / DSM 6882 / CCUG 24695 / JCM 21032 / LMG 3331 / NBRC 15819 / NCTC 12168 / Alc 37) (Ochrobactrum anthropi).